The primary structure comprises 391 residues: Phosphoglycerate kinase (391 aa).

Substrate contacts are provided by residues 21 to 23 (DLN), Arg36, 59 to 62 (HLGR), Arg113, and Arg146. ATP-binding positions include Lys197, Glu319, and 345 to 348 (GGDT).

The protein belongs to the phosphoglycerate kinase family. Monomer.

The protein resides in the cytoplasm. The catalysed reaction is (2R)-3-phosphoglycerate + ATP = (2R)-3-phospho-glyceroyl phosphate + ADP. Its pathway is carbohydrate degradation; glycolysis; pyruvate from D-glyceraldehyde 3-phosphate: step 2/5. The polypeptide is Phosphoglycerate kinase (Pseudoalteromonas atlantica (strain T6c / ATCC BAA-1087)).